The following is a 1071-amino-acid chain: ATP-dependent helicase/deoxyribonuclease subunit B (1071 aa).

Belongs to the helicase family. AddB/RexB type 2 subfamily. In terms of assembly, heterodimer of AddA and RexB. The cofactor is Mg(2+).

The heterodimer acts as both an ATP-dependent DNA helicase and an ATP-dependent, dual-direction single-stranded exonuclease. Recognizes the chi site generating a DNA molecule suitable for the initiation of homologous recombination. This subunit has 5' -&gt; 3' nuclease activity but not helicase activity. In Streptococcus pyogenes serotype M6 (strain ATCC BAA-946 / MGAS10394), this protein is ATP-dependent helicase/deoxyribonuclease subunit B.